Consider the following 429-residue polypeptide: Serine/threonine-protein kinase BGLF4 (429 aa).

The disordered stretch occupies residues 1–27 (MDVNMAAELSPTNSSSSGELSVSPEPP). Residues 1-409 (MDVNMAAELS…CRPRFEHPHL (409 aa)) enclose the Protein kinase domain. A compositionally biased stretch (low complexity) spans 14 to 23 (SSSSGELSVS). The interval 36–40 (KVTVI) is SUMO interaction motif. ATP-binding positions include 110–118 (LYHELMVCD) and Glu128. Catalysis depends on Asp195, which acts as the Proton acceptor. The interval 344 to 350 (VVLLEVL) is SUMO interaction motif.

It belongs to the protein kinase superfamily. Ser/Thr protein kinase family. As to quaternary structure, interacts with host NUP62 and NUP153; this interaction plays a role in nuclear targeting of BGLF4. Interacts with host SUMO1 and SUMO2.

It localises to the virion tegument. Its subcellular location is the host nucleus. It carries out the reaction L-seryl-[protein] + ATP = O-phospho-L-seryl-[protein] + ADP + H(+). The catalysed reaction is L-threonyl-[protein] + ATP = O-phospho-L-threonyl-[protein] + ADP + H(+). Functionally, plays many key roles by phosphorylating several proteins including the viral DNA processivity factor BMRF1, EBNA1 or EBNA2. Modifies the host nuclear envelope structure and induces the redistribution of nuclear envelope-associated proteins by phosphorylating host nucleoporins. Subsequently, promotes the nuclear transport of EBV lytic proteins. Required for efficient lytic DNA replication and release of nucleocapsids from the nucleus. Contributes to the compaction of host cell chromatin in cells undergoing lytic replication, presumably by phosphorylating the host condensin complex and host TOP2A. Induces disassembly of the nuclear lamina by phosphorylating with host LMNA. Phosphorylates substrates involved in capsid assembly and DNA packaging. Facilitates the switch from latent to lytic DNA replication by down-regulating EBNA1 replication function. Phosphorylates the viral immediate-early protein BZLF1 and inhibits its sumoylation by interacting with host SUMO1 and SUMO2. Phosphorylates also host SAMHD1 and thereby counteracts its antiviral effect by reducing its dNTP hydrolase activity. This chain is Serine/threonine-protein kinase BGLF4, found in Epstein-Barr virus (strain AG876) (HHV-4).